The primary structure comprises 1299 residues: DNA-directed RNA polymerase subunit beta' (1299 aa).

Zn(2+) contacts are provided by C60, C62, C75, and C78. A disordered region spans residues 385-405 (GRRGRPVTGPGNRPLKSLSDM). Mg(2+) contacts are provided by D535, D537, and D539. Zn(2+) is bound by residues C886, C962, C969, and C972.

The protein belongs to the RNA polymerase beta' chain family. In terms of assembly, the RNAP catalytic core consists of 2 alpha, 1 beta, 1 beta' and 1 omega subunit. When a sigma factor is associated with the core the holoenzyme is formed, which can initiate transcription. Mg(2+) serves as cofactor. Requires Zn(2+) as cofactor.

The catalysed reaction is RNA(n) + a ribonucleoside 5'-triphosphate = RNA(n+1) + diphosphate. DNA-dependent RNA polymerase catalyzes the transcription of DNA into RNA using the four ribonucleoside triphosphates as substrates. This chain is DNA-directed RNA polymerase subunit beta', found in Streptomyces coelicolor (strain ATCC BAA-471 / A3(2) / M145).